An 85-amino-acid chain; its full sequence is DNA-directed RNA polymerase subunit omega (85 aa).

This sequence belongs to the RNA polymerase subunit omega family. In terms of assembly, the RNAP catalytic core consists of 2 alpha, 1 beta, 1 beta' and 1 omega subunit. When a sigma factor is associated with the core the holoenzyme is formed, which can initiate transcription.

The catalysed reaction is RNA(n) + a ribonucleoside 5'-triphosphate = RNA(n+1) + diphosphate. Promotes RNA polymerase assembly. Latches the N- and C-terminal regions of the beta' subunit thereby facilitating its interaction with the beta and alpha subunits. The polypeptide is DNA-directed RNA polymerase subunit omega (Tropheryma whipplei (strain TW08/27) (Whipple's bacillus)).